The primary structure comprises 230 residues: Aquaporin Z (230 aa).

Helical transmembrane passes span 9–29 and 35–55; these read AELI…VLAA and IGVL…AFAI. The NPA 1 motif lies at 64-66; the sequence is NPA. 3 helical membrane passes run 83–103, 131–151, and 160–180; these read LPYV…IYLI, LGAG…VIMG, and GFAP…SIPV. The NPA 2 signature appears at 186 to 188; sequence NPA. Residues 194–214 traverse the membrane as a helical segment; that stretch reads ALFVGGWALQQLWLFWVAPLI.

Belongs to the MIP/aquaporin (TC 1.A.8) family. In terms of assembly, homotetramer.

It localises to the cell inner membrane. The catalysed reaction is H2O(in) = H2O(out). Channel that permits osmotically driven movement of water in both directions. It is involved in the osmoregulation and in the maintenance of cell turgor during volume expansion in rapidly growing cells. It mediates rapid entry or exit of water in response to abrupt changes in osmolarity. The chain is Aquaporin Z from Pseudomonas putida (strain ATCC 47054 / DSM 6125 / CFBP 8728 / NCIMB 11950 / KT2440).